Reading from the N-terminus, the 80-residue chain is Exodeoxyribonuclease 7 small subunit (80 aa).

It belongs to the XseB family. In terms of assembly, heterooligomer composed of large and small subunits.

Its subcellular location is the cytoplasm. It carries out the reaction Exonucleolytic cleavage in either 5'- to 3'- or 3'- to 5'-direction to yield nucleoside 5'-phosphates.. Its function is as follows. Bidirectionally degrades single-stranded DNA into large acid-insoluble oligonucleotides, which are then degraded further into small acid-soluble oligonucleotides. The chain is Exodeoxyribonuclease 7 small subunit from Pseudomonas putida (strain W619).